The chain runs to 623 residues: Kelch repeat and BTB domain-containing protein 2 (623 aa).

Residues 31–98 (TDIVLIVEGT…AYTGNLAMND (68 aa)) enclose the BTB domain. One can recognise a BACK domain in the interval 133-229 (CVRLLSFADL…IRIDALSEVT (97 aa)). Serine 300 is subject to Phosphoserine. Kelch repeat units lie at residues 317–380 (DIYI…CCEG), 381–429 (HIYA…VVHD), 431–469 (IYVM…AFGD), 470–529 (KIFY…RAVV), and 535–581 (CVFM…DFRC).

In terms of assembly, component of the BCR(KBTBD2) E3 ubiquitin ligase complex, at least composed of CUL3, KBTBD2 and RBX1. Interacts (via the BTB domain) with CUL3.

It functions in the pathway protein modification; protein ubiquitination. Functionally, substrate-specific adapter of a BCR (BTB-CUL3-RBX1) E3 ubiquitin ligase complex that acts as a regulator of the insulin signaling pathway, modulating insulin sensitivity by limiting PIK3R1/p85alpha abundance in adipocytes. Targets PIK3R1, the regulatory subunit of phosphatidylinositol 3-kinase (PI3K), for 'Lys-48'-linked polyubiquitination and proteasome-mediated degradation. In Pongo abelii (Sumatran orangutan), this protein is Kelch repeat and BTB domain-containing protein 2 (KBTBD2).